The sequence spans 260 residues: Snake venom serine protease 2 (260 aa).

Residues 1 to 18 (MVLIRVLANLLILQLFYA) form the signal peptide. The propeptide occupies 19-24 (QKSSEL). One can recognise a Peptidase S1 domain in the interval 25-251 (IIGGDECNIN…HLDWIKSIIA (227 aa)). 6 cysteine pairs are disulfide-bonded: C31–C165, C52–C68, C100–C258, C144–C212, C176–C191, and C202–C227. Residues N123 and N124 are each glycosylated (N-linked (GlcNAc...) asparagine).

The protein belongs to the peptidase S1 family. Snake venom subfamily. In terms of assembly, monomer. As to expression, expressed by the venom gland.

Its subcellular location is the secreted. Functionally, snake venom serine protease that may act in the hemostasis system of the prey. The sequence is that of Snake venom serine protease 2 (TLF2) from Protobothrops flavoviridis (Habu).